The chain runs to 149 residues: Transcriptional repressor NrdR (149 aa).

The segment at 3–34 is a zinc-finger region; that stretch reads CPFCFAVDTKVIDSRLVGEGSSVRRRRQCLVC. In terms of domain architecture, ATP-cone spans 49 to 139; that stretch reads PRVVKSNDVR…VYRSFEDIKE (91 aa).

It belongs to the NrdR family. Zn(2+) is required as a cofactor.

Negatively regulates transcription of bacterial ribonucleotide reductase nrd genes and operons by binding to NrdR-boxes. The protein is Transcriptional repressor NrdR of Shigella flexneri.